Consider the following 483-residue polypeptide: Glutamate--tRNA ligase (483 aa).

The 'HIGH' region signature appears at 9 to 19 (PSPTGNLHIGT). Residues 250–254 (KLSKR) carry the 'KMSKS' region motif. ATP is bound at residue Lys-253.

The protein belongs to the class-I aminoacyl-tRNA synthetase family. Glutamate--tRNA ligase type 1 subfamily. In terms of assembly, monomer.

The protein resides in the cytoplasm. The enzyme catalyses tRNA(Glu) + L-glutamate + ATP = L-glutamyl-tRNA(Glu) + AMP + diphosphate. In terms of biological role, catalyzes the attachment of glutamate to tRNA(Glu) in a two-step reaction: glutamate is first activated by ATP to form Glu-AMP and then transferred to the acceptor end of tRNA(Glu). In Synechocystis sp. (strain ATCC 27184 / PCC 6803 / Kazusa), this protein is Glutamate--tRNA ligase.